A 1181-amino-acid polypeptide reads, in one-letter code: Katanin p80 WD40 repeat-containing subunit B1 homolog KTN80.2 (1181 aa).

WD repeat units follow at residues 13–53 (AHSA…SLMS), 56–95 (GHTS…MVRA), 98–137 (GHRS…CIQT), 140–181 (GHSR…HEFK), 183–221 (HEGP…LIGS), 224–264 (PEAT…DGVD), and 266–303 (GWST…IEPY). Residues 114–130 (FLASGSSDANLKIWDIR) carry the DWD box motif. Disordered stretches follow at residues 361–383 (AHKS…NKSL), 503–597 (KPPR…ESKS), 702–739 (TSMA…QTRT), 754–869 (KMKS…VIST), and 988–1008 (TKTQ…ISGR). Polar residues-rich tracts occupy residues 365–379 (GSLS…QAGD) and 509–526 (RSPS…STDS). Basic and acidic residues-rich tracts occupy residues 530 to 553 (DSKK…DDRG) and 569 to 585 (RSER…ELKS). Polar residues-rich tracts occupy residues 703–739 (SMAT…QTRT), 754–791 (KMKS…TRTS), 822–841 (SATN…QAKT), and 850–859 (ILNQRQTTNM). The segment covering 998–1008 (TQKEEPQISGR) has biased composition (basic and acidic residues).

Belongs to the WD repeat KATNB1 family. In terms of assembly, component of KTN80-KTN1 complexes composed of a hexamer of KTN1-KTN80 heterodimers that sense microtubule (MT) geometry to confer precise MT severing. Interacts directly with AAA1/KTN1. Interacts with subunits of the CUL4-based E3 ligase complex DDB1A and DDB1B. In terms of tissue distribution, expressed at low levels in siliques, flowers, leaves, stems and roots.

It is found in the cytoplasm. The protein localises to the cytoskeleton. Its function is as follows. May participate in a complex which severs microtubules in an ATP-dependent manner. Microtubule severing may promote rapid reorganization of cellular microtubule arrays. Confers precision to microtubule (MT) severing by specific targeting of KTN1 to MT cleavage sites such as crossover or branching nucleation sites. Together with other KTN80s, regulates cell elongation by modulating MT organization. Negative regulator of abscisic acid (ABA) responses. May function as a substrate receptor for cullin-RING ubiquitin ligase 4 complexes (CRL4), a family of E3 ligases involved in protein degradation. This Arabidopsis thaliana (Mouse-ear cress) protein is Katanin p80 WD40 repeat-containing subunit B1 homolog KTN80.2.